The primary structure comprises 271 residues: Mannosyl-3-phosphoglycerate phosphatase (271 aa).

Asp-13 functions as the Nucleophile in the catalytic mechanism. The Mg(2+) site is built by Asp-13, Asp-15, and Asp-214.

This sequence belongs to the HAD-like hydrolase superfamily. MPGP family. Mg(2+) serves as cofactor.

It is found in the cytoplasm. The catalysed reaction is 2-O-(alpha-D-mannosyl)-3-phosphoglycerate + H2O = (2R)-2-O-(alpha-D-mannosyl)-glycerate + phosphate. The protein is Mannosyl-3-phosphoglycerate phosphatase of Escherichia coli (strain SE11).